The following is a 571-amino-acid chain: Isthmin-2 (571 aa).

A signal peptide spans 1–26 (MRALRDRAGLLLCVLLLAALLEAALG). Disordered stretches follow at residues 30–60 (KKPR…LKEE), 116–141 (ANTT…LREE), and 257–294 (EKDR…DEEE). The span at 116–131 (ANTTLSTPNPDTQASA) shows a compositional bias: polar residues. N-linked (GlcNAc...) asparagine glycosylation is present at N117. Positions 257–268 (EKDRAPGEKGEE) are enriched in basic and acidic residues. Residues 269–294 (KEEDEDYPSEDIEGEDQEDKEEDEEE) are compositionally biased toward acidic residues. N-linked (GlcNAc...) asparagine glycosylation is present at N300. The TSP type-1 domain occupies 327–371 (EPQKEWSPWSPCSGNCSTGKQQRTRPCGYGCTATETRTCDLPSCP). Disulfide bonds link C338-C365, C342-C370, and C353-C357. An N-linked (GlcNAc...) asparagine glycan is attached at N392. Residues 396 to 559 (MHDQDVDSCE…RACTDNPLEE (164 aa)) form the AMOP domain.

This sequence belongs to the isthmin family. In terms of tissue distribution, expressed at high levels in the placenta and at moderate levels in the pancreas, kidney, heart, liver, lung, brain and skeletal muscle.

Its subcellular location is the secreted. The sequence is that of Isthmin-2 (ISM2) from Homo sapiens (Human).